Consider the following 261-residue polypeptide: MAEAGKPRPLTAFAPPPPLWKHFTQDNLKRLEDIKKEASKGEDGKPRKKKWTPAELRALQLPPELRFLVPPEIPKSGQYSVFGELQSLSTTLPSLQEQGIEQLYPSTPTETDPDKPSQPSRPFNHAYYLLKISKSLLLNFLEFVGILSIAPEQFQSKVEDLRNLFINAHHLLNLYRPHQARESLIMMMEEQLNRSREEIQQMDKMHAEINGFLEQLKAQGIDIDSASKSREDVTAKRATGDQDANNANSSRLVWDILDGTD.

Residues 31–45 (LEDIKKEASKGEDGK) show a composition bias toward basic and acidic residues. The tract at residues 31–54 (LEDIKKEASKGEDGKPRKKKWTPA) is disordered.

This sequence belongs to the Mediator complex subunit 7 family. As to quaternary structure, component of the Mediator complex.

It is found in the nucleus. Functionally, component of the Mediator complex, a coactivator involved in the regulated transcription of nearly all RNA polymerase II-dependent genes. Mediator functions as a bridge to convey information from gene-specific regulatory proteins to the basal RNA polymerase II transcription machinery. Mediator is recruited to promoters by direct interactions with regulatory proteins and serves as a scaffold for the assembly of a functional preinitiation complex with RNA polymerase II and the general transcription factors. The polypeptide is Mediator of RNA polymerase II transcription subunit 7 (med7) (Aspergillus fumigatus (strain ATCC MYA-4609 / CBS 101355 / FGSC A1100 / Af293) (Neosartorya fumigata)).